Consider the following 147-residue polypeptide: Small ribosomal subunit protein uS5 (147 aa).

Residues 9–72 form the S5 DRBM domain; sequence FQEVVVNIGR…DDAFKNLIHV (64 aa).

It belongs to the universal ribosomal protein uS5 family. As to quaternary structure, part of the 30S ribosomal subunit. Contacts proteins S4 and S8.

With S4 and S12 plays an important role in translational accuracy. Functionally, located at the back of the 30S subunit body where it stabilizes the conformation of the head with respect to the body. This Helicobacter pylori (strain J99 / ATCC 700824) (Campylobacter pylori J99) protein is Small ribosomal subunit protein uS5.